A 540-amino-acid polypeptide reads, in one-letter code: Probable protein kinase UbiB (540 aa).

A helical membrane pass occupies residues 24–44; that stretch reads LLFDQPLLPWWLASLRLLMPW. A Protein kinase domain is found at 126–494; the sequence is RFDVEPLASA…RRRQGDRWAL (369 aa). Residues 132 to 140 and Lys-154 each bind ATP; that span reads LASASVAQV. Asp-289 (proton acceptor) is an active-site residue. 2 helical membrane-spanning segments follow: residues 496–516 and 518–538; these read LLGA…AETA and LAAP…YLIV.

This sequence belongs to the ABC1 family. UbiB subfamily.

It is found in the cell inner membrane. It participates in cofactor biosynthesis; ubiquinone biosynthesis [regulation]. Is probably a protein kinase regulator of UbiI activity which is involved in aerobic coenzyme Q (ubiquinone) biosynthesis. The sequence is that of Probable protein kinase UbiB from Pseudomonas putida (strain ATCC 700007 / DSM 6899 / JCM 31910 / BCRC 17059 / LMG 24140 / F1).